Reading from the N-terminus, the 424-residue chain is Zinc metalloproteinase-disintegrin-like brevilysin H2a (424 aa).

Position 1 is a pyrrolidone carboxylic acid (glutamine 1). Residues 9 to 207 form the Peptidase M12B domain; sequence RYVKLAIVAD…YKPQCILNEP (199 aa). A glycan (N-linked (GlcNAc...) asparagine) is linked at asparagine 69. Aspartate 96 contributes to the Ca(2+) binding site. 3 disulfide bridges follow: cysteine 120–cysteine 202, cysteine 164–cysteine 186, and cysteine 166–cysteine 169. Histidine 145 is a Zn(2+) binding site. Glutamate 146 is a catalytic residue. The Zn(2+) site is built by histidine 149 and histidine 155. An N-linked (GlcNAc...) asparagine glycan is attached at asparagine 185. Cysteine 202, asparagine 205, valine 217, asparagine 220, leucine 222, glutamate 224, glutamate 227, and aspartate 230 together coordinate Ca(2+). The region spanning 215–301 is the Disintegrin domain; the sequence is PPVCGNELLE…DCPTDDLQRN (87 aa). Disulfide bonds link cysteine 218/cysteine 247, cysteine 229/cysteine 242, cysteine 231/cysteine 237, cysteine 241/cysteine 264, cysteine 255/cysteine 261, cysteine 260/cysteine 286, cysteine 273/cysteine 293, cysteine 280/cysteine 312, cysteine 305/cysteine 317, cysteine 324/cysteine 374, cysteine 339/cysteine 385, cysteine 352/cysteine 362, cysteine 369/cysteine 411, and cysteine 405/cysteine 417. The D/ECD-tripeptide signature appears at 279-281; it reads DCD. 3 residues coordinate Ca(2+): aspartate 281, glutamate 284, and aspartate 296. N-linked (GlcNAc...) asparagine glycosylation is present at asparagine 331.

Belongs to the venom metalloproteinase (M12B) family. P-III subfamily. P-IIIa sub-subfamily. As to quaternary structure, monomer. Requires Zn(2+) as cofactor. In terms of processing, glycosylated. In terms of tissue distribution, expressed by the venom gland.

The protein resides in the secreted. Its proteolytic activity is inhibited by EDTA, TPEN, 1,10-phenanthroline, and some thiol compounds, but is enhanced by alkaline earth metal ions (Mg2+, Ca2+, Sr2+, and Ba2+). Its activity is not modulated by urea (4 M). Its function is as follows. Non-hemorrhagic metalloproteinase that degrades fibrinogen. The alpha chain (FGA) is rapidly degraded, the beta chain (FGB) is degraded very slowly, while the gamma chain is left intact. Shows a prefential cleavage at X-Leu bonds. Cleaves insulin B chain at '29-His-|-Leu-30', '33-Ser-|-His-34', '38-Ala-|-Leu-39' and '40-Tyr-|-Leu-41' bonds. The protein is Zinc metalloproteinase-disintegrin-like brevilysin H2a of Gloydius brevicauda (Korean slamosa snake).